The chain runs to 200 residues: Pyrrolidone-carboxylate peptidase (200 aa).

Catalysis depends on residues E79, C142, and H166.

It belongs to the peptidase C15 family. As to quaternary structure, homotetramer.

The protein resides in the cytoplasm. It catalyses the reaction Release of an N-terminal pyroglutamyl group from a polypeptide, the second amino acid generally not being Pro.. Functionally, removes 5-oxoproline from various penultimate amino acid residues except L-proline. The protein is Pyrrolidone-carboxylate peptidase (pcp) of Pyrococcus abyssi (strain GE5 / Orsay).